Reading from the N-terminus, the 161-residue chain is Phosphopantetheine adenylyltransferase (161 aa).

S11 is a binding site for substrate. Residues S11–F12 and H19 contribute to the ATP site. 3 residues coordinate substrate: K43, L75, and R89. ATP is bound by residues G90 to R92, E100, and Y125 to S131.

Belongs to the bacterial CoaD family. Homohexamer. Requires Mg(2+) as cofactor.

It localises to the cytoplasm. It catalyses the reaction (R)-4'-phosphopantetheine + ATP + H(+) = 3'-dephospho-CoA + diphosphate. Its pathway is cofactor biosynthesis; coenzyme A biosynthesis; CoA from (R)-pantothenate: step 4/5. Its function is as follows. Reversibly transfers an adenylyl group from ATP to 4'-phosphopantetheine, yielding dephospho-CoA (dPCoA) and pyrophosphate. The protein is Phosphopantetheine adenylyltransferase of Staphylococcus haemolyticus (strain JCSC1435).